An 82-amino-acid chain; its full sequence is Omega-conotoxin-like TxMKLT1-031 (82 aa).

The signal sequence occupies residues 1–22 (MKLTCMMIVAVLFLTAWTLVMA). Residues 23–49 (DDSNNGLANLFSKSRDEMEDPEASKLE) constitute a propeptide that is removed on maturation. 3 disulfides stabilise this stretch: C53-C71, C60-C76, and C70-C81.

This sequence belongs to the conotoxin O1 superfamily. Expressed by the venom duct.

It is found in the secreted. Omega-conotoxins act at presynaptic membranes, they bind and block voltage-gated calcium channels (Cav). The chain is Omega-conotoxin-like TxMKLT1-031 from Conus textile (Cloth-of-gold cone).